Reading from the N-terminus, the 126-residue chain is Large ribosomal subunit protein bL17 (126 aa).

The protein belongs to the bacterial ribosomal protein bL17 family. In terms of assembly, part of the 50S ribosomal subunit. Contacts protein L32.

The polypeptide is Large ribosomal subunit protein bL17 (Coxiella burnetii (strain CbuG_Q212) (Coxiella burnetii (strain Q212))).